Reading from the N-terminus, the 409-residue chain is tRNA-specific 2-thiouridylase MnmA (409 aa).

Residues 20-27 (AMSGGVDS) and L46 each bind ATP. C114 serves as the catalytic Nucleophile. C114 and C210 form a disulfide bridge. G138 is an ATP binding site. The tract at residues 160 to 162 (RDQ) is interaction with tRNA. C210 serves as the catalytic Cysteine persulfide intermediate.

Belongs to the MnmA/TRMU family.

The protein localises to the cytoplasm. The catalysed reaction is S-sulfanyl-L-cysteinyl-[protein] + uridine(34) in tRNA + AH2 + ATP = 2-thiouridine(34) in tRNA + L-cysteinyl-[protein] + A + AMP + diphosphate + H(+). Functionally, catalyzes the 2-thiolation of uridine at the wobble position (U34) of tRNA, leading to the formation of s(2)U34. The protein is tRNA-specific 2-thiouridylase MnmA of Bartonella henselae (strain ATCC 49882 / DSM 28221 / CCUG 30454 / Houston 1) (Rochalimaea henselae).